The chain runs to 230 residues: N-(5'-phosphoribosyl)anthranilate isomerase (230 aa).

It belongs to the TrpF family.

The enzyme catalyses N-(5-phospho-beta-D-ribosyl)anthranilate = 1-(2-carboxyphenylamino)-1-deoxy-D-ribulose 5-phosphate. The protein operates within amino-acid biosynthesis; L-tryptophan biosynthesis; L-tryptophan from chorismate: step 3/5. This Syntrophus aciditrophicus (strain SB) protein is N-(5'-phosphoribosyl)anthranilate isomerase.